The sequence spans 258 residues: MYRNILRKLKRQINTILKIYIFIKKHEHHLRKLFVIFQVIISIVLLSLSVTTNDHDHLFDSWYYFASHLILSLFGIFVFFKKSTNSKLLYLYVILLSGLLITASFSFFWYSGELNIIENTCISDQCNHDRAYYRKKTYKIIALIVVEGVALHPNLSWLIQVLKKERKLKQLNTINNTNDTAIRSPSLNNISGNNNNNINNNNINNSNNNINNTSYNNDYFNNHNIINNNKNNIYNNNNKINSELQPPSILNKNSKPIE.

4 helical membrane passes run 33–53 (LFVI…VTTN), 59–79 (FDSW…IFVF), 88–108 (LLYL…FSFF), and 140–160 (IIAL…WLIQ). A disordered region spans residues 237-258 (NNKINSELQPPSILNKNSKPIE). Residues 242 to 258 (SELQPPSILNKNSKPIE) are compositionally biased toward polar residues.

The protein resides in the membrane. This is an uncharacterized protein from Dictyostelium discoideum (Social amoeba).